A 181-amino-acid polypeptide reads, in one-letter code: Ribosome maturation factor RimM (181 aa).

In terms of domain architecture, PRC barrel spans 103 to 181 (EGDYYWSQLE…EMVVDWDPEF (79 aa)).

The protein belongs to the RimM family. Binds ribosomal protein uS19.

Its subcellular location is the cytoplasm. An accessory protein needed during the final step in the assembly of 30S ribosomal subunit, possibly for assembly of the head region. Essential for efficient processing of 16S rRNA. May be needed both before and after RbfA during the maturation of 16S rRNA. It has affinity for free ribosomal 30S subunits but not for 70S ribosomes. In Marinomonas sp. (strain MWYL1), this protein is Ribosome maturation factor RimM.